Reading from the N-terminus, the 171-residue chain is Sec-independent protein translocase protein TatB (171 aa).

A helical membrane pass occupies residues 2–22 (FDGIGFMELLLIGVLGLVVLG). The interval 69-171 (SKGLSNLSPE…DTRSNPKANG (103 aa)) is disordered. Residues 88-97 (QAAQSVNRPY) are compositionally biased toward polar residues. 2 stretches are compositionally biased toward low complexity: residues 114–130 (HSPV…HTSP) and 138–158 (PTAT…SEPS). Residues 160–171 (GADTRSNPKANG) show a composition bias toward polar residues.

This sequence belongs to the TatB family. In terms of assembly, the Tat system comprises two distinct complexes: a TatABC complex, containing multiple copies of TatA, TatB and TatC subunits, and a separate TatA complex, containing only TatA subunits. Substrates initially bind to the TatABC complex, which probably triggers association of the separate TatA complex to form the active translocon.

It localises to the cell inner membrane. Part of the twin-arginine translocation (Tat) system that transports large folded proteins containing a characteristic twin-arginine motif in their signal peptide across membranes. Together with TatC, TatB is part of a receptor directly interacting with Tat signal peptides. TatB may form an oligomeric binding site that transiently accommodates folded Tat precursor proteins before their translocation. This Shewanella baltica (strain OS185) protein is Sec-independent protein translocase protein TatB.